We begin with the raw amino-acid sequence, 339 residues long: UPF0450 protein C17orf58 (339 aa).

Residues 1–17 form the signal peptide; that stretch reads MTARAFWLLCLIVGSSP. The disordered stretch occupies residues 17-191; sequence PEAPVAERKT…PQRDAEPGAE (175 aa). Residues 21–36 are compositionally biased toward basic and acidic residues; that stretch reads VAERKTSPPHSRKPDS. Residues 56-72 are compositionally biased toward low complexity; that stretch reads APQRPRAAEVAPAARAW. The span at 112–125 shows a compositional bias: basic and acidic residues; the sequence is ASPRREPASEDAPR. A compositionally biased stretch (low complexity) spans 132–163; the sequence is LRFPAARPPALATEGSAGHAHPNRPRAAALAP. 3 cysteine pairs are disulfide-bonded: C193-C267, C197-C271, and C208-C338. The NTR domain maps to 193–338; sequence CARACRSDLD…QIQGAIHTQC (146 aa).

The protein belongs to the UPF0450 family.

The protein is UPF0450 protein C17orf58 (C17orf58) of Homo sapiens (Human).